The following is a 929-amino-acid chain: Isoleucine--tRNA ligase (929 aa).

A 'HIGH' region motif is present at residues 58 to 68 (PYANGDIHIGH). An L-isoleucyl-5'-AMP-binding site is contributed by glutamate 563. A 'KMSKS' region motif is present at residues 605–609 (KMSKS). Lysine 608 serves as a coordination point for ATP. Residues cysteine 892, cysteine 895, cysteine 912, and cysteine 915 each coordinate Zn(2+).

The protein belongs to the class-I aminoacyl-tRNA synthetase family. IleS type 1 subfamily. In terms of assembly, monomer. Zn(2+) serves as cofactor.

The protein localises to the cytoplasm. The catalysed reaction is tRNA(Ile) + L-isoleucine + ATP = L-isoleucyl-tRNA(Ile) + AMP + diphosphate. Functionally, catalyzes the attachment of isoleucine to tRNA(Ile). As IleRS can inadvertently accommodate and process structurally similar amino acids such as valine, to avoid such errors it has two additional distinct tRNA(Ile)-dependent editing activities. One activity is designated as 'pretransfer' editing and involves the hydrolysis of activated Val-AMP. The other activity is designated 'posttransfer' editing and involves deacylation of mischarged Val-tRNA(Ile). This chain is Isoleucine--tRNA ligase, found in Neisseria meningitidis serogroup C (strain 053442).